The primary structure comprises 596 residues: Actin-histidine N-methyltransferase (596 aa).

The disordered stretch occupies residues 1-22; the sequence is MGKKSRVKTQKSGTGATATVSP. Residues 10-20 show a composition bias toward polar residues; it reads QKSGTGATATV. S-adenosyl-L-methionine-binding positions include arginine 75, 104-106, arginine 254, 275-279, and 325-327; these read EGF, DMCNH, and SGF. In terms of domain architecture, SET spans 94–314; that stretch reads EGFEMVNFKE…AGDQIYIFYG (221 aa). The disordered stretch occupies residues 551–596; sequence GLVNGESLIPNGTRSENESLSPEESENTTGDTEESSGSMDAVKERL. Residues 571-584 show a composition bias toward acidic residues; the sequence is SPEESENTTGDTEE.

The protein belongs to the class V-like SAM-binding methyltransferase superfamily. SETD3 actin-histidine methyltransferase family. Interacts with MYOD1. Phosphorylated by GSK3B, which is required for recognition by the SCF(FBXW7) complex and subsequent degradation. In terms of processing, ubiquitinated by the SCF(FBXW7) complex following phosphorylation by GSK3B, leading to its degradation by the proteasome.

Its subcellular location is the cytoplasm. The protein localises to the nucleus. The enzyme catalyses L-histidyl-[protein] + S-adenosyl-L-methionine = N(tele)-methyl-L-histidyl-[protein] + S-adenosyl-L-homocysteine + H(+). Protein-histidine N-methyltransferase that specifically mediates 3-methylhistidine (tele-methylhistidine) methylation of actin at 'His-73'. Histidine methylation of actin is required for smooth muscle contraction of the laboring uterus during delivery. Does not have protein-lysine N-methyltransferase activity and probably only catalyzes histidine methylation of actin. In Rattus norvegicus (Rat), this protein is Actin-histidine N-methyltransferase.